A 348-amino-acid polypeptide reads, in one-letter code: Erlin-1 (348 aa).

Over 1-7 the chain is Cytoplasmic; it reads MNMTQAR. Residues 8–28 form a helical membrane-spanning segment; it reads VLVAAVVGLVAVLLYASIHKI. Residues 29-348 are Lumenal-facing; the sequence is EEGHLAVYYR…NLIQNKESTG (320 aa). N-linked (GlcNAc...) asparagine glycosylation is present at N108. K269 bears the N6-acetyllysine mark. The segment covering 321–333 has biased composition (basic and acidic residues); sequence TGRESSHPSKEAL. The interval 321 to 348 is disordered; that stretch reads TGRESSHPSKEALEPSGENLIQNKESTG. The segment covering 339–348 has biased composition (polar residues); sequence NLIQNKESTG.

This sequence belongs to the band 7/mec-2 family. Forms a heteromeric complex with ERLIN2. In complex with ERLIN2, interacts with RNF170. Interacts with AMFR and SYVN1. Deubiquitinated by USP25; leading to stabilization.

The protein resides in the endoplasmic reticulum membrane. Component of the ERLIN1/ERLIN2 complex which mediates the endoplasmic reticulum-associated degradation (ERAD) of inositol 1,4,5-trisphosphate receptors (IP3Rs). Involved in regulation of cellular cholesterol homeostasis by regulation the SREBP signaling pathway. Binds cholesterol and may promote ER retention of the SCAP-SREBF complex. This chain is Erlin-1, found in Pongo abelii (Sumatran orangutan).